Reading from the N-terminus, the 163-residue chain is C-type lectin lectoxin-Lio2 (163 aa).

Residues 1 to 21 (MERFIFAALLVVALSLSGTGA) form the signal peptide. Disulfide bonds link Cys-25/Cys-36, Cys-53/Cys-152, and Cys-127/Cys-144. The C-type lectin domain maps to 32 to 153 (SDGYCYKVFK…CRSKRYFICK (122 aa)). Residues 117–119 (EPN) carry the Mannose-binding motif. Ca(2+)-binding residues include Glu-125 and Asp-141.

This sequence belongs to the true venom lectin family. Expressed by the venom gland.

The protein localises to the secreted. In terms of biological role, mannose-binding lectin which recognizes specific carbohydrate structures and agglutinates a variety of animal cells by binding to cell-surface glycoproteins and glycolipids. May be a calcium-dependent lectin. The sequence is that of C-type lectin lectoxin-Lio2 from Erythrolamprus poecilogyrus (Water snake).